The primary structure comprises 101 residues: uncharacterized protein (101 aa).

The span at 65-79 shows a compositional bias: low complexity; that stretch reads QEAAAPAGPQEPAEA. A disordered region spans residues 65–101; sequence QEAAAPAGPQEPAEASGDAGKKEEVEEEEIEIDFGMF. Residues 89-101 are compositionally biased toward acidic residues; the sequence is VEEEEIEIDFGMF.

This is an uncharacterized protein from Encephalitozoon cuniculi (strain GB-M1) (Microsporidian parasite).